A 131-amino-acid polypeptide reads, in one-letter code: MSMSDPIADLLTRIRNAQMVAKPTVSVPSSKVKIAISQVLKDEGYIDGFQVKTEDGKTELVITLKYYAGRPVIERIERVSRPGLRVYKASASIPQVQNGLGVAIVTTPKGVMTDRKARATGVGGEVLCYVA.

The protein belongs to the universal ribosomal protein uS8 family. In terms of assembly, part of the 30S ribosomal subunit. Contacts proteins S5 and S12.

Its function is as follows. One of the primary rRNA binding proteins, it binds directly to 16S rRNA central domain where it helps coordinate assembly of the platform of the 30S subunit. This is Small ribosomal subunit protein uS8 from Variovorax paradoxus (strain S110).